The chain runs to 447 residues: GTPase Der (447 aa).

EngA-type G domains follow at residues 4-165 and 180-357; these read KIIT…SVEE and LQIV…KIWN. Residues 10 to 17, 57 to 61, 119 to 122, 186 to 193, 233 to 237, and 298 to 301 each bind GTP; these read GRPNVGKS, DTPGL, NKCE, GRPNAGKS, DTAGL, and NKWD. Residues 358–443 form the KH-like domain; the sequence is KKITTNKLNK…PIRFTYVKNK (86 aa).

This sequence belongs to the TRAFAC class TrmE-Era-EngA-EngB-Septin-like GTPase superfamily. EngA (Der) GTPase family. Associates with the 50S ribosomal subunit.

Its function is as follows. GTPase that plays an essential role in the late steps of ribosome biogenesis. The chain is GTPase Der from Rickettsia prowazekii (strain Madrid E).